Reading from the N-terminus, the 131-residue chain is QRFP-like peptide (131 aa).

Positions 1 to 25 are cleaved as a signal peptide; that stretch reads MGVRVMRSRICVIGLLVLMLTQSEA. Residues 26–94 constitute a propeptide that is removed on maturation; sequence YSFREKSWRT…DDGISPADKR (69 aa). Residues 48–131 are disordered; sequence RRDGGDQAPS…RESRRSFGSD (84 aa). Positions 97-106 are enriched in polar residues; sequence MLQQLAQQLK. Phenylalanine 119 carries the post-translational modification Phenylalanine amide. Residues 120-131 are compositionally biased toward basic and acidic residues; the sequence is GKRESRRSFGSD. Positions 123–131 are excised as a propeptide; it reads ESRRSFGSD.

It belongs to the RFamide neuropeptide family.

Its subcellular location is the secreted. Functionally, ligand for the G-protein coupled receptor QRFPR. The polypeptide is QRFP-like peptide (Branchiostoma floridae (Florida lancelet)).